The primary structure comprises 926 residues: Storkhead-box protein 2 (926 aa).

Disordered stretches follow at residues 1–32 (MKKT…RSEK), 338–391 (EEEK…HLDI), 452–529 (EMPF…SYID), 564–588 (KEPS…YGEL), 632–672 (GVKK…GGVA), 724–803 (LKSH…GTMQ), and 825–926 (LAPK…VTSV). Residues 18 to 32 (FSDRASDRMRSRSEK) are compositionally biased toward basic and acidic residues. Residues 353–378 (HSGRSKKSRTHRKSHGKSRSHSKTRV) show a composition bias toward basic residues. A compositionally biased stretch (basic and acidic residues) spans 379–391 (SKGDPSDGSHLDI). Residues 463–472 (SHSKVHRSHS) show a composition bias toward basic residues. A compositionally biased stretch (basic and acidic residues) spans 473–495 (HTQDRRSRNERSNKAKERSRSMD). Over residues 518 to 529 (QDDQTPSQSYID) the composition is skewed to polar residues. Positions 632–658 (GVKKLSPSDRQVPHSSREPVGHKEESP) are enriched in basic and acidic residues. Polar residues predominate over residues 746–769 (LGTSAAQAMPASQRQQESGGNQEA). Residues 785–799 (GANKNTEEEKNREDV) are compositionally biased toward basic and acidic residues. Polar residues-rich tracts occupy residues 847-884 (MDSS…QNPA) and 914-926 (KPSN…VTSV).

The chain is Storkhead-box protein 2 (STOX2) from Homo sapiens (Human).